Here is a 557-residue protein sequence, read N- to C-terminus: Formate--tetrahydrofolate ligase (557 aa).

66-73 contributes to the ATP binding site; sequence TPAGEGKS.

The protein belongs to the formate--tetrahydrofolate ligase family.

It catalyses the reaction (6S)-5,6,7,8-tetrahydrofolate + formate + ATP = (6R)-10-formyltetrahydrofolate + ADP + phosphate. The protein operates within one-carbon metabolism; tetrahydrofolate interconversion. The sequence is that of Formate--tetrahydrofolate ligase from Clostridium botulinum (strain Kyoto / Type A2).